Reading from the N-terminus, the 504-residue chain is Anaerobic nitric oxide reductase transcription regulator NorR (504 aa).

Position 57 is a 4-aspartylphosphate (Asp-57). The Sigma-54 factor interaction domain maps to 187–416 (MIGLSPGMTQ…LEHAIHRAVV (230 aa)). Residues 215–222 (GETGTGKE) and 278–287 (ADNGTLFLDE) contribute to the ATP site. A DNA-binding region (H-T-H motif) is located at residues 479–498 (WAACARMLETDVANLHRLAK).

It participates in nitrogen metabolism; nitric oxide reduction. Functionally, required for the expression of anaerobic nitric oxide (NO) reductase, acts as a transcriptional activator for at least the norVW operon. Activation also requires sigma-54. In Escherichia coli (strain K12 / MC4100 / BW2952), this protein is Anaerobic nitric oxide reductase transcription regulator NorR.